We begin with the raw amino-acid sequence, 118 residues long: MSRVKRGVTARARHKKVLNQAKGYYGARSRVYRVAKQAVIKAGQYAYRDRKVKKRTFRSLWIVRINAAARQHDISYSQLINGLNKAGIELDRKALAELAVYNKDAFAAVVEKAKAALA.

The protein belongs to the bacterial ribosomal protein bL20 family.

Binds directly to 23S ribosomal RNA and is necessary for the in vitro assembly process of the 50S ribosomal subunit. It is not involved in the protein synthesizing functions of that subunit. This chain is Large ribosomal subunit protein bL20, found in Francisella tularensis subsp. novicida (strain U112).